An 887-amino-acid polypeptide reads, in one-letter code: MEKEDKSFGIGMLDYNRENPESSGHSRVAVIRKQKTEQENNNLSWEDRHYIPDLHKSNKIKTPTSLADEKKSHNELDPKAQIKKLMETRSGGTYIPPAKLKALQAQLTDVNTPEYQRMQWEALKKSINGLINKVNKSNIRDIIPELFQENIIRGRALYCRSIMKAQAASLPFTPIYAAMTAVINTKFPQIGELLLTRLIVQFRKSFQRNDKSMCISSSSFIAHLINQKIAHEIVGLQILAVLLERPTNDSIEIAVMLLREIGAYLAEVSTRAYNGVFERFRTILHEGQLERRTQFIIEVLFQTRKDKFKNNPTIPQELDLVEEEDQITHYISLDDNLDVQESLGIFHYDPDYEENEKKYDAIKHEILGEEDDDENEEDEEDSEETSESEEDESVNDEKPQVIDQTNASLVNLRKSIYLTIMSSVDFEECCHKLLKIDLPEGQEIELCNMVIECNSQERTYAKFYGLIGERFCKLSRTWRSTYEQCFKNYYETIHRYETNRLRNIALFFANLLSTDSIGWEVYDCVRLTEDDTTASSRIFLKIMFQEIVEALGLKSLVERLHDPNLVPYLHGLFPVDEARNVRFSINYFTSIGLGALTEEMREYLLTMPKSEPKEQDSEGYSSGSETGSTYSSSYSSTYSRGRSYSRSTRSYSKSRSYSRSRSVTPINNINHKKYIRKDRELSPRGRERSSNRNSYSDLSRSSSLSRGRSRSYTPEGRLIESEDKGYRSRSSSPASRKYRSRQRYRRSYAGSTSRGRSFSRSPSYRRRLSMSCSVSYSRSPSPAARPISRSPARNKRSYDSLSYNRQYSPKVSRKRSNESRSPSPYTLRKQKTYHLNKRNEDFVVKMDKKGSESPVILAPWLREVDDGELYKDRNSESDSVRKQPRAD.

Positions 1–27 are disordered; the sequence is MEKEDKSFGIGMLDYNRENPESSGHSR. The MIF4G domain maps to 124–307; it reads KKSINGLINK…EVLFQTRKDK (184 aa). A disordered region spans residues 366-401; the sequence is ILGEEDDDENEEDEEDSEETSESEEDESVNDEKPQV. Acidic residues predominate over residues 368-394; it reads GEEDDDENEEDEEDSEETSESEEDESV. In terms of domain architecture, MI spans 411–527; sequence NLRKSIYLTI…GWEVYDCVRL (117 aa). Disordered regions lie at residues 607–834 and 867–887; these read MPKS…KTYH and GELY…PRAD. Low complexity predominate over residues 618 to 662; sequence EGYSSGSETGSTYSSSYSSTYSRGRSYSRSTRSYSKSRSYSRSRS. Phosphoserine is present on S662. At T664 the chain carries Phosphothreonine. Basic and acidic residues predominate over residues 677 to 690; the sequence is KDRELSPRGRERSS. Residues 691 to 712 show a composition bias toward low complexity; sequence NRNSYSDLSRSSSLSRGRSRSY. Basic and acidic residues predominate over residues 717-726; it reads RLIESEDKGY. The segment covering 736 to 746 has biased composition (basic residues); sequence RKYRSRQRYRR. 2 stretches are compositionally biased toward low complexity: residues 747-762 and 769-791; these read SYAG…SRSP and SMSC…SRSP. Polar residues predominate over residues 799-809; it reads DSLSYNRQYSP.

It belongs to the CWC22 family. In terms of assembly, belongs to the 40S cdc5-associated complex (or cwf complex), a spliceosome sub-complex reminiscent of a late-stage spliceosome composed of the U2, U5 and U6 snRNAs and at least brr2, cdc5, cwf2/prp3, cwf3/syf1, cwf4/syf3, cwf5/ecm2, spp42/cwf6, cwf7/spf27, cwf8, cwf9, cwf10, cwf11, cwf12, prp45/cwf13, cwf14, cwf15, cwf16, cwf17, cwf18, cwf19, cwf20, cwf21, cwf22, cwf23, cwf24, cwf25, cwf26, cyp7/cwf27, cwf28, cwf29/ist3, lea1, msl1, prp5/cwf1, prp10, prp12/sap130, prp17, prp22, sap61, sap62, sap114, sap145, slu7, smb1, smd1, smd3, smf1, smg1 and syf2.

It is found in the cytoplasm. Its subcellular location is the nucleus. Its function is as follows. May be involved in pre-mRNA splicing. The chain is Pre-mRNA-splicing factor cwf22 (cwf22) from Schizosaccharomyces pombe (strain 972 / ATCC 24843) (Fission yeast).